Reading from the N-terminus, the 363-residue chain is Glyceraldehyde-3-phosphate dehydrogenase, muscle (363 aa).

The segment at 1-176 (MVKVGVNGFG…KYDKSLKIVS (176 aa)) is interaction with WARS. An N6,N6-dimethyllysine modification is found at Lys3. At Asn7 the chain carries Deamidated asparagine. NAD(+)-binding positions include 11-12 (RI) and Asp33. Phosphotyrosine is present on Tyr70. Position 89 is an N6-acetyllysine (Lys89). Asn92 is modified (deamidated asparagine). N6,N6-dimethyllysine is present on Lys94. The residue at position 98 (Asn98) is a Deamidated asparagine. Thr103 is subject to Phosphothreonine. NAD(+) contacts are provided by Arg108 and Ser150. Ser150 and Ser176 each carry phosphoserine. Asn177 is subject to Deamidated asparagine. Ser179 carries the phosphoserine modification. 179–181 (SCT) provides a ligand contact to D-glyceraldehyde 3-phosphate. Cys180 (nucleophile) is an active-site residue. An ADP-ribosylcysteine; by autocatalysis; in irreversibly inhibited form modification is found at Cys180. Cys180 bears the Cysteine persulfide mark. The residue at position 180 (Cys180) is an S-(2-succinyl)cysteine. Cys180 carries the post-translational modification S-nitrosocysteine; in reversibly inhibited form. Thr181 bears the Phosphothreonine mark. Deamidated asparagine is present on Asn183. Residues Thr205, Thr210, and Thr212 each carry the phosphothreonine modification. D-glyceraldehyde 3-phosphate is bound at residue Thr210. Lys214 participates in a covalent cross-link: Glycyl lysine isopeptide (Lys-Gly) (interchain with G-Cter in SUMO2). Lys222 bears the N6,N6-dimethyllysine; alternate mark. Lys222 bears the N6-acetyllysine; alternate mark. Lys222 is modified (N6-malonyllysine; alternate). Phosphothreonine is present on Thr239. 239–240 (TG) is a D-glyceraldehyde 3-phosphate binding site. Lys243 carries the N6,N6-dimethyllysine; alternate modification. Lys243 carries the post-translational modification N6-malonyllysine; alternate. Position 247 is an N6-acetyllysine (Lys247). Asn253 carries the post-translational modification Deamidated asparagine. Lys255 bears the N6,N6-dimethyllysine; alternate mark. Residue Lys255 is modified to N6-acetyllysine; alternate. Thr257 bears the Phosphothreonine mark. Arg262 is a D-glyceraldehyde 3-phosphate binding site. Thr265 carries the post-translational modification Phosphothreonine. Ser269 carries the post-translational modification Phosphoserine. Residue Cys275 is modified to S-(2-succinyl)cysteine. An S-nitrosocysteine modification is found at Cys275. At Lys282 the chain carries N6-acetyllysine. Lys291 carries the post-translational modification N6,N6-dimethyllysine. Residue Ser340 is modified to Phosphoserine. The residue at position 344 (Asn344) is a Deamidated asparagine. Asn344 serves as a coordination point for NAD(+). At Ser361 the chain carries Phosphoserine. Lys362 is subject to N6,N6-dimethyllysine.

The protein belongs to the glyceraldehyde-3-phosphate dehydrogenase family. Homotetramer. Interacts with TPPP; the interaction is direct. Interacts (when S-nitrosylated) with SIAH1; leading to nuclear translocation. Interacts with RILPL1/GOSPEL, leading to prevent the interaction between GAPDH and SIAH1 and prevent nuclear translocation. Interacts with CHP1; the interaction increases the binding of CHP1 with microtubules. Associates with microtubules. Interacts with EIF1AD, USP25, PRKCI and WARS1. Interacts with phosphorylated RPL13A; inhibited by oxidatively-modified low-densitity lipoprotein (LDL(ox)). Component of the GAIT complex. Interacts with FKBP6; leading to inhibit GAPDH catalytic activity. Interacts with TRAF2, promoting TRAF2 ubiquitination. Interacts with TRAF3, promoting TRAF3 ubiquitination. ISGylated. In terms of processing, S-nitrosylation of Cys-180 leads to interaction with SIAH1, followed by translocation to the nucleus S-nitrosylation of Cys-275 is induced by interferon-gamma and LDL(ox) implicating the iNOS-S100A8/9 transnitrosylase complex and seems to prevent interaction with phosphorylated RPL13A and to interfere with GAIT complex activity. Post-translationally, sulfhydration at Cys-180 increases catalytic activity.

Its subcellular location is the cytoplasm. It localises to the cytosol. The protein resides in the cytoskeleton. The protein localises to the nucleus. The enzyme catalyses D-glyceraldehyde 3-phosphate + phosphate + NAD(+) = (2R)-3-phospho-glyceroyl phosphate + NADH + H(+). It catalyses the reaction S-nitroso-L-cysteinyl-[GAPDH] + L-cysteinyl-[protein] = L-cysteinyl-[GAPDH] + S-nitroso-L-cysteinyl-[protein]. It functions in the pathway carbohydrate degradation; glycolysis; pyruvate from D-glyceraldehyde 3-phosphate: step 1/5. With respect to regulation, glyceraldehyde-3-phosphate dehydrogenase activity is inhibited by fumarate, via the formation of S-(2-succinyl)cysteine residues. Its function is as follows. Has both glyceraldehyde-3-phosphate dehydrogenase and nitrosylase activities, thereby playing a role in glycolysis and nuclear functions, respectively. Glyceraldehyde-3-phosphate dehydrogenase is a key enzyme in glycolysis that catalyzes the first step of the pathway by converting D-glyceraldehyde 3-phosphate (G3P) into 3-phospho-D-glyceroyl phosphate. Modulates the organization and assembly of the cytoskeleton. Facilitates the CHP1-dependent microtubule and membrane associations through its ability to stimulate the binding of CHP1 to microtubules. Component of the GAIT (gamma interferon-activated inhibitor of translation) complex which mediates interferon-gamma-induced transcript-selective translation inhibition in inflammation processes. Upon interferon-gamma treatment assembles into the GAIT complex which binds to stem loop-containing GAIT elements in the 3'-UTR of diverse inflammatory mRNAs (such as ceruplasmin) and suppresses their translation. Also plays a role in innate immunity by promoting TNF-induced NF-kappa-B activation and type I interferon production, via interaction with TRAF2 and TRAF3, respectively. Participates in nuclear events including transcription, RNA transport, DNA replication and apoptosis. Nuclear functions are probably due to the nitrosylase activity that mediates cysteine S-nitrosylation of nuclear target proteins such as SIRT1, HDAC2 and PRKDC. The sequence is that of Glyceraldehyde-3-phosphate dehydrogenase, muscle from Jaculus orientalis (Greater Egyptian jerboa).